The chain runs to 366 residues: Probable UDP-arabinopyranose mutase 2 (366 aa).

The DXD motif signature appears at 104-106 (DDD). The N-linked (Glc...) arginine glycan is linked to Arg152.

It belongs to the RGP family. In terms of assembly, homopentamer or homohexamer. Mn(2+) is required as a cofactor. The cofactor is Mg(2+). In terms of processing, reversibly glycosylated by UDP-glucose, UDP-xylose and UDP-galactose, but not UDP-mannose. As to expression, expressed in all tissues tested, including root, tuber, leaf, petiole, shoot, stolon and stem.

It is found in the secreted. The protein resides in the cell wall. Its subcellular location is the cell junction. The protein localises to the plasmodesma. It localises to the golgi apparatus. The enzyme catalyses UDP-beta-L-arabinofuranose = UDP-beta-L-arabinopyranose. Functionally, probable UDP-L-arabinose mutase involved in the biosynthesis of cell wall non-cellulosic polysaccharides. Was initially shown to possess an autoglycosylating activity which is dependent on the presence of UDP-glucose and manganese. The protein is Probable UDP-arabinopyranose mutase 2 of Solanum tuberosum (Potato).